Here is a 180-residue protein sequence, read N- to C-terminus: MQEKAVVLDDQMIRRALTRISHEIVERNKGVDNCVLVGIKTRGIFIAQRLAERIGQIEGKEMEVGELDITLYRDDLTLQSKHKEPLVKGSDIPVDITKKKVILVDDVLYTGRTVRAAMDALMDLGRPSQIQLAVLVDRGHRELPIRADYVGKNIPTSSEERIEVDLQETDQQDRVSIYDK.

A PRPP-binding motif is present at residues 101–113 (VILVDDVLYTGRT).

This sequence belongs to the purine/pyrimidine phosphoribosyltransferase family. PyrR subfamily. Homodimer and homohexamer; in equilibrium.

The enzyme catalyses UMP + diphosphate = 5-phospho-alpha-D-ribose 1-diphosphate + uracil. Regulates transcriptional attenuation of the pyrimidine nucleotide (pyr) operon by binding in a uridine-dependent manner to specific sites on pyr mRNA. This disrupts an antiterminator hairpin in the RNA and favors formation of a downstream transcription terminator, leading to a reduced expression of downstream genes. Its function is as follows. Also displays a weak uracil phosphoribosyltransferase activity which is not physiologically significant. The chain is Bifunctional protein PyrR from Bacillus mycoides (strain KBAB4) (Bacillus weihenstephanensis).